The following is a 361-amino-acid chain: MKALILVGGFGTRLRPLTLSFPKPLVDFANKPMILHQIEALKEVGVTEVVLAINYRPEVMLNFLKDFEDKLGITITCSQETEPLGTAGPLALARDKLVDGSGEPFFVLNSDVISEYPFAELIKFHKSHGGEATIMVTKVDEPSKYGVVVMEEVTGMVEKFVEKPKIFVGNKINAGIYLLNPSVLDRIELKPTSIEKEVFPRIASDAKLFALVLPGFWMDVGQPRDYITGLRLYLDSLRKRSTNRLATGAHIVGNVLVHESAKIGEGCLIGPDVAIGPGCVVEDGVRLSRCTVMRGVHIKKHACISNSIIGWHSTVGQWARIENMTILGEDVHVGDEVYTNGGVVLPHKEIKSSILKPEIVM.

GDP-alpha-D-mannose is bound by residues leucine 6 and valine 7. Diphosphate is bound by residues glycine 9, glycine 11, threonine 12, arginine 13, and lysine 23. Positions 85, 109, 111, 146, and 173 each coordinate GDP-alpha-D-mannose.

The protein belongs to the transferase hexapeptide repeat family.

The catalysed reaction is alpha-D-mannose 1-phosphate + GTP + H(+) = GDP-alpha-D-mannose + diphosphate. Its pathway is nucleotide-sugar biosynthesis; GDP-alpha-D-mannose biosynthesis; GDP-alpha-D-mannose from alpha-D-mannose 1-phosphate (GTP route): step 1/1. Catalyzes a reaction of the Smirnoff-Wheeler pathway, the major route to ascorbate biosynthesis in plants. This is Probable mannose-1-phosphate guanylyltransferase 2 from Oryza sativa subsp. japonica (Rice).